The following is a 475-amino-acid chain: Ras-GEF domain-containing family member 1B-B (475 aa).

Over residues 1 to 19 (MPQTTPYSSKFNPSAYSSS) the composition is skewed to polar residues. The disordered stretch occupies residues 1 to 25 (MPQTTPYSSKFNPSAYSSSHSHRQP). Positions 36 to 166 (RDNKLVSGSL…LIQRLLRKLT (131 aa)) constitute an N-terminal Ras-GEF domain. The region spanning 209–456 (DPFIFAQQLT…QLASYESEGP (248 aa)) is the Ras-GEF domain. Positions 452–475 (ESEGPENNLERDTRRSLRSSLSRM) are disordered.

Its function is as follows. Guanine nucleotide exchange factor (GEF) for Ras family proteins. In Danio rerio (Zebrafish), this protein is Ras-GEF domain-containing family member 1B-B.